We begin with the raw amino-acid sequence, 423 residues long: DUF21 domain-containing protein At2g14520 (423 aa).

Residues 1–11 (MAVEYECCGTS) are Extracellular-facing. The CNNM transmembrane domain occupies 8–191 (CGTSFFIHIA…GKGGELTHDE (184 aa)). Residues 12 to 32 (FFIHIAVIVLLVLFAGLMSGL) form a helical membrane-spanning segment. Over 33-70 (TLGLMSMSLVDLEVLAKSGTPRDRIHAAKILPVVKNQH) the chain is Cytoplasmic. The chain crosses the membrane as a helical span at residues 71 to 91 (LLLCTLLICNAAAMEALPIFL). Topologically, residues 92-94 (DAL) are extracellular. Residues 95-115 (VTAWGAILISVTLILLFGEII) form a helical membrane-spanning segment. The Cytoplasmic portion of the chain corresponds to 116 to 136 (PQSVCSRHGLAIGATVAPFVR). The chain crosses the membrane as a helical span at residues 137-157 (VLVWICLPVAWPISKLLDFLL). Topologically, residues 158–423 (GHGRVALFRR…DETDHHFEDL (266 aa)) are extracellular. Residues 210 to 271 (MTPISDTFVI…TINPDEEIQV (62 aa)) form the CBS 1 domain. N-linked (GlcNAc...) asparagine glycans are attached at residues Asn-273 and Asn-322. CBS domains lie at 275–332 (TIRR…RVDV) and 356–415 (PNRA…IFDE).

Its subcellular location is the membrane. The protein is DUF21 domain-containing protein At2g14520 (CBSDUF3) of Arabidopsis thaliana (Mouse-ear cress).